The following is an 887-amino-acid chain: Probable dual specificity protein kinase madd-3 (887 aa).

Disordered stretches follow at residues P77 to A147, A163 to L299, L313 to G333, T347 to A475, and R504 to D533. The span at P108–P118 shows a compositional bias: low complexity. Over residues V121–S130 the composition is skewed to basic and acidic residues. A compositionally biased stretch (polar residues) spans S177–G192. A compositionally biased stretch (low complexity) spans S217 to A241. Polar residues-rich tracts occupy residues P314–G332 and N356–G366. A compositionally biased stretch (basic and acidic residues) spans D367–L377. Low complexity predominate over residues L407–N419. Positions F439 to E462 are enriched in polar residues. The Protein kinase domain maps to F551–F863. Residues L557–V565 and K580 each bind ATP. Residue D677 is the Proton acceptor of the active site.

Belongs to the protein kinase superfamily. CMGC Ser/Thr protein kinase family. Lammer subfamily. As to expression, expressed in body wall, vulval and anal depressor muscles.

The protein localises to the cytoplasm. Its subcellular location is the nucleus. Its function is as follows. Probable dual specificity kinase acting on both serine/threonine and tyrosine-containing substrates. Negatively regulates p38 MAPK signaling to allow for the plasma membrane of body wall muscle cells to form projections, also called muscle arms, that extend and connect the body wall muscles to target motor neurons. Negative regulation of p38 MAPK signaling may in turn modulate the trafficking of the muscle specific receptor eva-1 to the lysosome, to ensure proper display of the eva-1 receptor on the plasma membrane of muscle cells and allow for muscle arm extension towards guidance cues. This is Probable dual specificity protein kinase madd-3 from Caenorhabditis elegans.